Reading from the N-terminus, the 168-residue chain is Segregation and condensation protein B (168 aa).

It belongs to the ScpB family. In terms of assembly, homodimer. Homodimerization may be required to stabilize the binding of ScpA to the Smc head domains. Component of a cohesin-like complex composed of ScpA, ScpB and the Smc homodimer, in which ScpA and ScpB bind to the head domain of Smc. The presence of the three proteins is required for the association of the complex with DNA.

Its subcellular location is the cytoplasm. Functionally, participates in chromosomal partition during cell division. May act via the formation of a condensin-like complex containing Smc and ScpA that pull DNA away from mid-cell into both cell halves. This chain is Segregation and condensation protein B, found in Caldanaerobacter subterraneus subsp. tengcongensis (strain DSM 15242 / JCM 11007 / NBRC 100824 / MB4) (Thermoanaerobacter tengcongensis).